Reading from the N-terminus, the 220-residue chain is Endonuclease NucS (220 aa).

This sequence belongs to the NucS endonuclease family.

It is found in the cytoplasm. In terms of biological role, cleaves both 3' and 5' ssDNA extremities of branched DNA structures. The polypeptide is Endonuclease NucS (Mycobacterium leprae (strain TN)).